The chain runs to 557 residues: Urease subunit alpha (557 aa).

Positions 130–557 (GFIDTHIHWV…LPLTQLYFIY (428 aa)) constitute a Urease domain. Ni(2+)-binding residues include histidine 135, histidine 137, and lysine 217. Lysine 217 is modified (N6-carboxylysine). Residue histidine 219 coordinates substrate. Histidine 246 and histidine 272 together coordinate Ni(2+). The active-site Proton donor is histidine 320. Residue aspartate 360 coordinates Ni(2+).

It belongs to the metallo-dependent hydrolases superfamily. Urease alpha subunit family. As to quaternary structure, heterohexamer of 3 UreC (alpha) and 3 UreAB (gamma/beta) subunits. Ni cation is required as a cofactor. Post-translationally, carboxylation allows a single lysine to coordinate two nickel ions.

Its subcellular location is the cytoplasm. It catalyses the reaction urea + 2 H2O + H(+) = hydrogencarbonate + 2 NH4(+). It functions in the pathway nitrogen metabolism; urea degradation; CO(2) and NH(3) from urea (urease route): step 1/1. This chain is Urease subunit alpha, found in Sulfurisphaera tokodaii (strain DSM 16993 / JCM 10545 / NBRC 100140 / 7) (Sulfolobus tokodaii).